Here is a 240-residue protein sequence, read N- to C-terminus: Zein-alpha 19C2 (240 aa).

A signal peptide spans 1-21 (MATKIFSLLMLLALSTCVANA).

It belongs to the zein family. In terms of assembly, interacts with OP10 (via N-terminus).

In terms of biological role, zeins are major seed storage proteins. This is Zein-alpha 19C2 from Zea mays (Maize).